The following is a 193-amino-acid chain: UPF0314 protein Pden_1914 (193 aa).

4 consecutive transmembrane segments (helical) span residues 13-33 (APYW…LWIG), 62-82 (WYTP…WLVA), 148-168 (LPVW…TWLI), and 172-192 (LALN…WQAA).

The protein belongs to the UPF0314 family.

It localises to the cell membrane. This is UPF0314 protein Pden_1914 from Paracoccus denitrificans (strain Pd 1222).